Consider the following 5263-residue polypeptide: Fibroin heavy chain (5263 aa).

The signal sequence occupies residues 1–21 (MRVKTFVILCCALQYVAYTNA). Residues 149–5206 (AAVGAGAGAG…GSGAGAGGSV (5058 aa)) form a highly repetitive region. C5260 and C5263 are disulfide-bonded.

As to quaternary structure, silk fibroin elementary unit consists in a disulfide-linked heavy and light chain and a p25 glycoprotein in molar ratios of 6:6:1. This results in a complex of approximately 2.3 MDa. Post-translationally, the interchain disulfide bridge is essential for the intracellular transport and secretion of fibroin. Produced exclusively in the posterior (PSG) section of silk glands, which are essentially modified salivary glands.

In terms of biological role, core component of the silk filament; a strong, insoluble and chemically inert fiber. The polypeptide is Fibroin heavy chain (FIBH) (Bombyx mori (Silk moth)).